Consider the following 393-residue polypeptide: Pinosylvin synthase (393 aa).

57 to 60 contributes to the substrate binding site; it reads KFKR. The active site involves cysteine 167. Residues leucine 270 and 308–310 contribute to the substrate site; that span reads GGR.

It belongs to the thiolase-like superfamily. Chalcone/stilbene synthases family. Homodimer.

It localises to the cytoplasm. The enzyme catalyses (E)-cinnamoyl-CoA + 3 malonyl-CoA + 3 H(+) = (E)-pinosylvin + 4 CO2 + 4 CoA. It catalyses the reaction 3-phenylpropanoyl-CoA + 3 malonyl-CoA + 3 H(+) = dihydropinosylvin + 4 CO2 + 4 CoA. It functions in the pathway phytoalexin biosynthesis; hydropinosylvin biosynthesis. In terms of biological role, catalyzes the production of pinosylvin from cinnamoyl-CoA and malonyl-CoA, and dihydropinosylvin from dihydrocinnamoyl-CoA. In Pinus sylvestris (Scotch pine), this protein is Pinosylvin synthase.